The chain runs to 366 residues: MLIWLVELSDKVQLFNLFRYITFRAGAAMFTSALIVFLFGPAIINSLRVRQGKGQPIRADGPQTHFKKAGTPTMGGLMILAGILGGSLLWGDLSNVYVVAVLMVTLGFGAIGFYDDYLKVTKQSDKGFSGKARLGIEFLIAAIAVFFMMKMALASAPHGGTLGSSIAFPFFKEFVINLGYFFVLFGAFVIVGAGNAVNLTDGLDGLAIVPVMIAAATFGVIAYLAGNAVFANYLQINFVPGTGELAVIVGAVIGAGLGFLWFNAPPAAIFMGDTGSLALGGLIGSIAVATKHEIVMVIVGGLFVMETLSVIIQVFWFKRTGRRVFLMAPIHHHFEKKGWTESQVVIRFWIISVGLALLGLATLKLR.

A run of 10 helical transmembrane segments spans residues 25 to 45 (AGAA…AIIN), 70 to 90 (GTPT…SLLW), 93 to 113 (LSNV…AIGF), 134 to 154 (LGIE…MALA), 174 to 194 (FVIN…VGAG), 205 to 225 (GLAI…AYLA), 245 to 265 (LAVI…FNAP), 268 to 288 (AIFM…SIAV), 297 to 317 (VIVG…VFWF), and 343 to 363 (QVVI…LATL).

The protein belongs to the glycosyltransferase 4 family. MraY subfamily. It depends on Mg(2+) as a cofactor.

It localises to the cell inner membrane. The enzyme catalyses UDP-N-acetyl-alpha-D-muramoyl-L-alanyl-gamma-D-glutamyl-meso-2,6-diaminopimeloyl-D-alanyl-D-alanine + di-trans,octa-cis-undecaprenyl phosphate = di-trans,octa-cis-undecaprenyl diphospho-N-acetyl-alpha-D-muramoyl-L-alanyl-D-glutamyl-meso-2,6-diaminopimeloyl-D-alanyl-D-alanine + UMP. Its pathway is cell wall biogenesis; peptidoglycan biosynthesis. In terms of biological role, catalyzes the initial step of the lipid cycle reactions in the biosynthesis of the cell wall peptidoglycan: transfers peptidoglycan precursor phospho-MurNAc-pentapeptide from UDP-MurNAc-pentapeptide onto the lipid carrier undecaprenyl phosphate, yielding undecaprenyl-pyrophosphoryl-MurNAc-pentapeptide, known as lipid I. This is Phospho-N-acetylmuramoyl-pentapeptide-transferase from Agrobacterium fabrum (strain C58 / ATCC 33970) (Agrobacterium tumefaciens (strain C58)).